A 104-amino-acid chain; its full sequence is Large ribosomal subunit protein bL21 (104 aa).

Belongs to the bacterial ribosomal protein bL21 family. Part of the 50S ribosomal subunit. Contacts protein L20.

Functionally, this protein binds to 23S rRNA in the presence of protein L20. The sequence is that of Large ribosomal subunit protein bL21 from Alkalilimnicola ehrlichii (strain ATCC BAA-1101 / DSM 17681 / MLHE-1).